A 78-amino-acid chain; its full sequence is MSSIEERVKKIVAEQLGVKEEEVKNEASFVEDLGADSLDTVELVMALEEEFETEIPDEEAEKITTVQLAINYINENLA.

Residues 2–77 form the Carrier domain; sequence SSIEERVKKI…LAINYINENL (76 aa). O-(pantetheine 4'-phosphoryl)serine is present on S37.

The protein belongs to the acyl carrier protein (ACP) family. 4'-phosphopantetheine is transferred from CoA to a specific serine of apo-ACP by AcpS. This modification is essential for activity because fatty acids are bound in thioester linkage to the sulfhydryl of the prosthetic group.

It localises to the cytoplasm. Its pathway is lipid metabolism; fatty acid biosynthesis. Functionally, carrier of the growing fatty acid chain in fatty acid biosynthesis. The polypeptide is Acyl carrier protein (Saccharophagus degradans (strain 2-40 / ATCC 43961 / DSM 17024)).